The following is a 642-amino-acid chain: Threonine--tRNA ligase (642 aa).

The region spanning 1-61 (MPVITLPDGS…EHDAQIAIIT (61 aa)) is the TGS domain. Residues 243–534 (DHRKIGKQLD…LTEEYAGFYP (292 aa)) form a catalytic region. Positions 334, 385, and 511 each coordinate Zn(2+).

It belongs to the class-II aminoacyl-tRNA synthetase family. Homodimer. The cofactor is Zn(2+).

It localises to the cytoplasm. It catalyses the reaction tRNA(Thr) + L-threonine + ATP = L-threonyl-tRNA(Thr) + AMP + diphosphate + H(+). Its function is as follows. Catalyzes the attachment of threonine to tRNA(Thr) in a two-step reaction: L-threonine is first activated by ATP to form Thr-AMP and then transferred to the acceptor end of tRNA(Thr). Also edits incorrectly charged L-seryl-tRNA(Thr). The sequence is that of Threonine--tRNA ligase from Sodalis glossinidius (strain morsitans).